A 117-amino-acid chain; its full sequence is Protein RALF-like 32 (117 aa).

Residues Met1 to Ser26 form the signal peptide. The propeptide at Lys27 to Glu64 is removed in mature form. Asn35 carries N-linked (GlcNAc...) asparagine glycosylation. The interval Arg77 to Cys107 is disordered. Disulfide bonds link Cys82/Cys95 and Cys107/Cys113.

This sequence belongs to the plant rapid alkalinization factor (RALF) family. Post-translationally, proteolytically cleaved, probably by S1P, a subtilisin-like serine protease (subtilase).

Its subcellular location is the secreted. Functionally, cell signaling peptide that may regulate plant stress, growth, and development. Mediates a rapid alkalinization of extracellular space by mediating a transient increase in the cytoplasmic Ca(2+) concentration leading to a calcium-dependent signaling events through a cell surface receptor and a concomitant activation of some intracellular mitogen-activated protein kinases. The sequence is that of Protein RALF-like 32 (RALFL32) from Arabidopsis thaliana (Mouse-ear cress).